Consider the following 236-residue polypeptide: Sugar fermentation stimulation protein homolog (236 aa).

It belongs to the SfsA family.

The sequence is that of Sugar fermentation stimulation protein homolog from Methylobacterium nodulans (strain LMG 21967 / CNCM I-2342 / ORS 2060).